An 814-amino-acid polypeptide reads, in one-letter code: S-layer protein sap (814 aa).

An N-terminal signal peptide occupies residues 1-29 (MAKTNSYKKVIAGTMTAAMVAGVVSPVAA). 3 SLH domains span residues 30 to 93 (AGKT…DAKP), 94 to 150 (SFAD…KVNG), and 152 to 214 (PATK…AAKV). In terms of domain architecture, BIG2 spans 403 to 479 (FTSKDFKQNN…TVKDSKGKEL (77 aa)).

Post-translationally, probably glycosylated.

It is found in the secreted. It localises to the cell wall. The protein localises to the S-layer. Its function is as follows. The S-layer is a paracrystalline mono-layered assembly of proteins which coat the surface of bacteria. This chain is S-layer protein sap (sap), found in Bacillus anthracis.